The chain runs to 431 residues: uncharacterized protein (431 aa).

4 helical membrane-spanning segments follow: residues 228–248, 279–299, 349–369, and 388–408; these read GLLSIPLTSSIIIYGFIHYLS, IGLPKIILYSNLATFCYNFTF, ILWPFVGKCTGGLLLNAFLWI, and MIFNIIGCGTAAIGWSSLKLY.

The protein resides in the membrane. This is an uncharacterized protein from Saccharomyces cerevisiae (strain ATCC 204508 / S288c) (Baker's yeast).